The chain runs to 275 residues: Putative hydroxypyruvate isomerase (275 aa).

Active-site proton donor/acceptor residues include glutamate 147 and glutamate 246.

It belongs to the hyi family.

It catalyses the reaction 3-hydroxypyruvate = 2-hydroxy-3-oxopropanoate. Functionally, catalyzes the reversible isomerization between hydroxypyruvate and 2-hydroxy-3-oxopropanoate (also termed tartronate semialdehyde). In Xenopus laevis (African clawed frog), this protein is Putative hydroxypyruvate isomerase (hyi).